Reading from the N-terminus, the 476-residue chain is Adenosylhomocysteinase (476 aa).

Thr67, Asp142, and Glu202 together coordinate substrate. Position 203 to 205 (203 to 205 (TTT)) interacts with NAD(+). Substrate contacts are provided by Lys232 and Asp236. Residues Asn237, 266 to 271 (GYGDVG), Glu289, Asn324, 345 to 347 (IGH), and Asn390 contribute to the NAD(+) site.

This sequence belongs to the adenosylhomocysteinase family. It depends on NAD(+) as a cofactor.

The protein resides in the cytoplasm. The catalysed reaction is S-adenosyl-L-homocysteine + H2O = L-homocysteine + adenosine. It functions in the pathway amino-acid biosynthesis; L-homocysteine biosynthesis; L-homocysteine from S-adenosyl-L-homocysteine: step 1/1. May play a key role in the regulation of the intracellular concentration of adenosylhomocysteine. This is Adenosylhomocysteinase from Synechococcus sp. (strain CC9605).